A 215-amino-acid chain; its full sequence is 3-demethoxyubiquinol 3-hydroxylase (215 aa).

Positions 64, 94, 97, 146, 178, and 181 each coordinate Fe cation.

This sequence belongs to the COQ7 family. It depends on Fe cation as a cofactor.

The protein resides in the cell membrane. It catalyses the reaction a 5-methoxy-2-methyl-3-(all-trans-polyprenyl)benzene-1,4-diol + AH2 + O2 = a 3-demethylubiquinol + A + H2O. It participates in cofactor biosynthesis; ubiquinone biosynthesis. Functionally, catalyzes the hydroxylation of 2-nonaprenyl-3-methyl-6-methoxy-1,4-benzoquinol during ubiquinone biosynthesis. This is 3-demethoxyubiquinol 3-hydroxylase from Pseudomonas putida (strain GB-1).